Here is a 268-residue protein sequence, read N- to C-terminus: Pantothenate synthetase (268 aa).

18–25 (MGYLHEGH) provides a ligand contact to ATP. Residue His25 is the Proton donor of the active site. Gln49 contacts (R)-pantoate. Residue Gln49 participates in beta-alanine binding. Position 135–138 (135–138 (GQKD)) interacts with ATP. Gln141 serves as a coordination point for (R)-pantoate. ATP-binding positions include Val164 and 172–175 (LSSR).

Belongs to the pantothenate synthetase family. As to quaternary structure, homodimer.

The protein localises to the cytoplasm. The catalysed reaction is (R)-pantoate + beta-alanine + ATP = (R)-pantothenate + AMP + diphosphate + H(+). It participates in cofactor biosynthesis; (R)-pantothenate biosynthesis; (R)-pantothenate from (R)-pantoate and beta-alanine: step 1/1. In terms of biological role, catalyzes the condensation of pantoate with beta-alanine in an ATP-dependent reaction via a pantoyl-adenylate intermediate. This is Pantothenate synthetase from Dehalococcoides mccartyi (strain ATCC BAA-2266 / KCTC 15142 / 195) (Dehalococcoides ethenogenes (strain 195)).